Here is a 473-residue protein sequence, read N- to C-terminus: Trigger factor (473 aa).

Residues 174–261 (GDIAVVSFKG…LKDLKEKELP (88 aa)) form the PPIase FKBP-type domain. The segment at 437 to 473 (EISEKVTKSTTKSKTKSKTKKESQAKSEPNKKKKEKK) is disordered. Basic and acidic residues predominate over residues 456–466 (KKESQAKSEPN).

This sequence belongs to the FKBP-type PPIase family. Tig subfamily.

It is found in the cytoplasm. It carries out the reaction [protein]-peptidylproline (omega=180) = [protein]-peptidylproline (omega=0). Functionally, involved in protein export. Acts as a chaperone by maintaining the newly synthesized protein in an open conformation. Functions as a peptidyl-prolyl cis-trans isomerase. This is Trigger factor from Prochlorococcus marinus (strain MIT 9515).